A 651-amino-acid chain; its full sequence is L-aspartate oxidase, chloroplastic (651 aa).

The transit peptide at 1 to 74 (MAAHVSTGNI…PISETSKPIR (74 aa)) directs the protein to the chloroplast. FAD-binding positions include 92–95 (SGVA), Lys114, 121–128 (NTNYAQGG), and Asp292. Arg368 functions as the Proton donor/acceptor in the catalytic mechanism. FAD is bound by residues Glu453 and 469-470 (SL).

Belongs to the FAD-dependent oxidoreductase 2 family. NadB subfamily. In terms of assembly, interacts in vitro with QS. FAD serves as cofactor.

It localises to the plastid. It is found in the chloroplast. The enzyme catalyses L-aspartate + O2 = iminosuccinate + H2O2. It functions in the pathway cofactor biosynthesis; NAD(+) biosynthesis; iminoaspartate from L-aspartate (oxidase route): step 1/1. Its function is as follows. Catalyzes the oxidation of L-aspartate to iminoaspartate. Can complement nadB-deficient E.coli mutant. Plays a role in stomatal immunity. This is L-aspartate oxidase, chloroplastic from Arabidopsis thaliana (Mouse-ear cress).